Here is a 591-residue protein sequence, read N- to C-terminus: DDB1- and CUL4-associated factor 8 (591 aa).

Over residues 1–25 the composition is skewed to polar residues; that stretch reads MSNKRPNTTDGRTDLANGSLSSSPE. Residues 1–140 form a disordered region; that stretch reads MSNKRPNTTD…EDWVSSETTA (140 aa). 2 positions are modified to phosphoserine: serine 22 and serine 23. The Nuclear export signal signature appears at 40-51; sequence IEVEASDLSLSL. 2 stretches are compositionally biased toward basic and acidic residues: residues 66–100 and 118–131; these read RGTD…HGHS and SRDQ…RALE. Phosphoserine is present on residues serine 100, serine 123, and serine 124. 7 WD repeats span residues 185-224, 228-269, 275-315, 323-363, 379-418, 426-466, and 470-509; these read GHTG…PVLD, GHKS…CCKN, QHKG…PASK, EKKV…ENEN, ESKA…GAQY, RNNA…IIQF, and DKGG…STEL. Arginine 198 carries the omega-N-methylarginine; by PRMT1 modification. The segment at 552–591 is disordered; the sequence is HRRWREPGVGATDADSDESPSSSDTSDEEEGPDRVQCMPS.

This sequence belongs to the WD repeat DCAF8 family. Interacts with DDB1, CUL4A and CUL4B. Interacts with KPNA1, KPNB1 and XPO1. As to expression, expressed in the brain.

Its subcellular location is the nucleus. The protein resides in the cytoplasm. The protein operates within protein modification; protein ubiquitination. Its function is as follows. May function as a substrate receptor for CUL4-DDB1 E3 ubiquitin-protein ligase complex. The polypeptide is DDB1- and CUL4-associated factor 8 (Dcaf8) (Mus musculus (Mouse)).